A 153-amino-acid chain; its full sequence is Ribosome maturation factor RimP (153 aa).

The protein belongs to the RimP family.

It localises to the cytoplasm. Its function is as follows. Required for maturation of 30S ribosomal subunits. The protein is Ribosome maturation factor RimP of Clostridium botulinum (strain Loch Maree / Type A3).